Reading from the N-terminus, the 122-residue chain is Large ribosomal subunit protein eL8 (122 aa).

This sequence belongs to the eukaryotic ribosomal protein eL8 family. In terms of assembly, part of the 50S ribosomal subunit. Probably part of the RNase P complex.

It is found in the cytoplasm. Multifunctional RNA-binding protein that recognizes the K-turn motif in ribosomal RNA, the RNA component of RNase P, box H/ACA, box C/D and box C'/D' sRNAs. This chain is Large ribosomal subunit protein eL8, found in Methanothrix thermoacetophila (strain DSM 6194 / JCM 14653 / NBRC 101360 / PT) (Methanosaeta thermophila).